Consider the following 221-residue polypeptide: Histone H1.3 (221 aa).

The span at 1–17 shows a compositional bias: low complexity; the sequence is MSETAPLAPTIPAPAEK. Positions 1–43 are disordered; that stretch reads MSETAPLAPTIPAPAEKTPVKKKAKKAGATAGKRKASGPPVSE. Residue S2 is modified to N-acetylserine. S2 bears the Phosphoserine mark. K17 carries the N6-acetyllysine modification. T18 is subject to Phosphothreonine. A compositionally biased stretch (basic residues) spans 20–36; the sequence is VKKKAKKAGATAGKRKA. K35, K47, and K53 each carry N6-(beta-hydroxybutyryl)lysine. The region spanning 37-110 is the H15 domain; the sequence is SGPPVSELIT…GASGSFKLNK (74 aa). R55 carries the citrulline modification. K65, K76, K86, and K91 each carry N6-(beta-hydroxybutyryl)lysine. The tract at residues 90-221 is disordered; the sequence is SKGTLVQTKG…KAKKAAPKKK (132 aa). S105 is modified (phosphoserine; by PKC). K107 is subject to N6-(beta-hydroxybutyryl)lysine. 3 stretches are compositionally biased toward basic residues: residues 120–141, 150–161, and 170–179; these read KAKKAGAAKPRKPAGAAKKPKK, KSIKKTPKKVKK, and KVAKSAKKVK. K170 carries the post-translational modification N6-(beta-hydroxybutyryl)lysine. Over residues 180-193 the composition is skewed to low complexity; that stretch reads TPQPKKAAKSPAKA. A compositionally biased stretch (basic residues) spans 194-221; it reads KAPKPKAAKPKSGKPKVTKAKKAAPKKK.

It belongs to the histone H1/H5 family. In terms of processing, H1 histones are progressively phosphorylated during the cell cycle, becoming maximally phosphorylated during late G2 phase and M phase, and being dephosphorylated sharply thereafter. Citrullination at Arg-55 (H1R54ci) by PADI4 takes place within the DNA-binding site of H1 and results in its displacement from chromatin and global chromatin decondensation, thereby promoting pluripotency and stem cell maintenance.

The protein resides in the nucleus. The protein localises to the chromosome. Its function is as follows. Histone H1 protein binds to linker DNA between nucleosomes forming the macromolecular structure known as the chromatin fiber. Histones H1 are necessary for the condensation of nucleosome chains into higher-order structured fibers. Also acts as a regulator of individual gene transcription through chromatin remodeling, nucleosome spacing and DNA methylation. This Homo sapiens (Human) protein is Histone H1.3.